The chain runs to 202 residues: Recoverin (202 aa).

A lipid anchor (N-myristoyl glycine) is attached at Gly2. Cys39 bears the Cysteine sulfenic acid (-SOH) mark. 4 EF-hand domains span residues 41–59 (SGRITKQEFQSIYSKFFPE), 61–96 (DPKAYAQHVFRSFDANSDGTLDFKEYVIALHMTSAG), 97–132 (KTNQKLEWAFSLYDVDGNGAISKSEVLEIVMAIFKM), and 147–182 (TPEKRAEKIWGFFGKKDDDKLTEEEFIEGTLANKEI). Residues Asp74, Asn76, Asp78, Thr80, Glu85, Asp110, Asp112, Asn114, and Glu121 each contribute to the Ca(2+) site. Residues 189–192 (EPRK) are interaction with GRK1.

The protein belongs to the recoverin family. In terms of assembly, homodimer; disulfide-linked. Homodimerization is caused by prolonged intense illumination. May form a complex composed of RHO, GRK1 and RCVRN in a Ca(2+)-dependent manner; RCVRN prevents the interaction between GRK1 and RHO. Interacts (via C-terminus) with GRK1 (via N-terminus); the interaction is Ca(2+)-dependent. In terms of processing, the N-terminal glycine is linked to one of four different types of acyl groups. The most abundant is myristoleate (14:1), but 14:0, 14:2, and 12:0 acyl residues are also present. The Ca(2+) induced exposure of the myristoyl group, known as the calcium-myristoyl switch, promotes RCVRN binding to the photoreceptor cell membranes only when intracellular Ca(2+) concentration is high. Post-translationally, oxidation on Cys-39 occurs in response to prolonged intense illumination and results in the formation of disulfide homodimers, and to a lesser extent disulfide-linked heterodimers.

The protein resides in the photoreceptor inner segment. Its subcellular location is the cell projection. It localises to the cilium. The protein localises to the photoreceptor outer segment. It is found in the photoreceptor outer segment membrane. The protein resides in the perikaryon. In terms of biological role, acts as a calcium sensor and regulates phototransduction of cone and rod photoreceptor cells. Modulates light sensitivity of cone photoreceptor in dark and dim conditions. In response to high Ca(2+) levels induced by low light levels, prolongs RHO/rhodopsin activation in rod photoreceptor cells by binding to and inhibiting GRK1-mediated phosphorylation of RHO/rhodopsin. Plays a role in scotopic vision/enhances vision in dim light by enhancing signal transfer between rod photoreceptors and rod bipolar cells. Improves rod photoreceptor sensitivity in dim light and mediates response of rod photoreceptors to facilitate detection of change and motion in bright light. This chain is Recoverin (RCVRN), found in Canis lupus familiaris (Dog).